Here is a 147-residue protein sequence, read N- to C-terminus: Hemoglobin subunit gamma (147 aa).

In terms of domain architecture, Globin spans 3–147 (HFTAEEKAII…VATALAHKYH (145 aa)). Residues histidine 64 and histidine 93 each contribute to the heme b site.

The protein belongs to the globin family. As to quaternary structure, heterotetramer of two alpha chains and two gamma chains in fetal hemoglobin (Hb F). Red blood cells.

Functionally, gamma chains make up the fetal hemoglobin F, in combination with alpha chains. This chain is Hemoglobin subunit gamma (HBG), found in Otolemur crassicaudatus (Brown greater galago).